Reading from the N-terminus, the 174-residue chain is Alpha-crystallin B chain (174 aa).

Met1 carries the post-translational modification N-acetylmethionine. One can recognise a sHSP domain in the interval 55–163 (RMPSWLETGL…PERSIPITRE (109 aa)). The Zn(2+) site is built by His82, His103, Glu105, and His110. The disordered stretch occupies residues 148–174 (RKQSDVPERSIPITREEKPAIAGSQRK). Residues 149 to 166 (KQSDVPERSIPITREEKP) show a composition bias toward basic and acidic residues.

It belongs to the small heat shock protein (HSP20) family. In terms of assembly, heteromer composed of three CRYAA and one CRYAB subunits. Aggregates with homologous proteins, including the small heat shock protein HSPB1, to form large heteromeric complexes. Inter-subunit bridging via zinc ions enhances stability, which is crucial as there is no protein turn over in the lens. Lens as well as other tissues.

In terms of biological role, may contribute to the transparency and refractive index of the lens. In Gallus gallus (Chicken), this protein is Alpha-crystallin B chain (CRYAB).